A 456-amino-acid chain; its full sequence is Choline kinase (456 aa).

It belongs to the choline/ethanolamine kinase family. Monomer. Mg(2+) is required as a cofactor.

It is found in the cytoplasm. It localises to the nucleus. The enzyme catalyses choline + ATP = phosphocholine + ADP + H(+). It functions in the pathway phospholipid metabolism; phosphatidylcholine biosynthesis; phosphocholine from choline: step 1/1. Its function is as follows. Catalyzes the committed step in the synthesis of phosphatidylcholine by the CDP-choline pathway. In Schizosaccharomyces pombe (strain 972 / ATCC 24843) (Fission yeast), this protein is Choline kinase.